The following is a 146-amino-acid chain: Hemoglobin subunit beta (146 aa).

An N-acetylvaline modification is found at Val-1. Positions 2–146 (HLTADEKSAV…VATALGHKYH (145 aa)) constitute a Globin domain. Thr-12 is subject to Phosphothreonine. Ser-44 bears the Phosphoserine mark. The residue at position 59 (Lys-59) is an N6-acetyllysine. His-63 is a binding site for heme b. Position 82 is an N6-acetyllysine (Lys-82). His-92 is a binding site for heme b. Cys-93 carries the S-nitrosocysteine modification. Position 144 is an N6-acetyllysine (Lys-144).

Belongs to the globin family. In terms of assembly, heterotetramer of two alpha chains and two beta chains. Red blood cells.

Functionally, involved in oxygen transport from the lung to the various peripheral tissues. The protein is Hemoglobin subunit beta (HBB) of Antrozous pallidus (Pallid bat).